A 238-amino-acid chain; its full sequence is 15,16-dihydrobiliverdin:ferredoxin oxidoreductase (238 aa).

It belongs to the HY2 family.

It catalyses the reaction 15,16-dihydrobiliverdin + oxidized 2[4Fe-4S]-[ferredoxin] = biliverdin IXalpha + reduced 2[4Fe-4S]-[ferredoxin] + 2 H(+). In terms of biological role, catalyzes the two-electron reduction of biliverdin IX-alpha at the C15 methine bridge. In Prochlorococcus marinus (strain NATL1A), this protein is 15,16-dihydrobiliverdin:ferredoxin oxidoreductase.